The following is a 215-amino-acid chain: MKAYQREFIEFALNKQVLKFGEFTLKSGRISPYFFNAGLFNTGLDLAKLGRFYAAALMDCGVEFDLLFGPAYKGIPIATTTAVALAEHHERDVPYCFNRKEAKTHGEGGNLVGSPLQGRVMLVDDVITAGTAIRESMEIINAQGATLAGVMISLDRQERGRGEISAIQEVERDYHCKVIAIVTLNDVIRYLEDKPEMAEHLVAVRQYREQYGVTL.

Lys-26 contacts 5-phospho-alpha-D-ribose 1-diphosphate. An orotate-binding site is contributed by 34–35 (FF). Residues 72 to 73 (YK), Arg-99, Lys-100, Lys-103, His-105, and 124 to 132 (DDVITAGTA) contribute to the 5-phospho-alpha-D-ribose 1-diphosphate site. Orotate contacts are provided by Thr-128 and Arg-156.

It belongs to the purine/pyrimidine phosphoribosyltransferase family. PyrE subfamily. In terms of assembly, homodimer. Requires Mg(2+) as cofactor.

The catalysed reaction is orotidine 5'-phosphate + diphosphate = orotate + 5-phospho-alpha-D-ribose 1-diphosphate. Its pathway is pyrimidine metabolism; UMP biosynthesis via de novo pathway; UMP from orotate: step 1/2. Functionally, catalyzes the transfer of a ribosyl phosphate group from 5-phosphoribose 1-diphosphate to orotate, leading to the formation of orotidine monophosphate (OMP). This Yersinia pseudotuberculosis serotype O:1b (strain IP 31758) protein is Orotate phosphoribosyltransferase.